The primary structure comprises 469 residues: MFLNRMMKTRTGLYRLYSTLKVPHVEINGIKYKTDPQTTNVTDSIIKLTDRSLHLKESHPVGILRDLIEKKLNSVDNTFKIFNNFKPVVTTMENFDSLGFPKDHPGRSKSDTYYINETHLLRTHTSAHELECFQKIRNDSDNIKSGFLISADVYRRDEIDKTHYPVFHQMEGATIWKRTKADVGVKEPMYIEKIREDIRQVENLLNKENVKITVDDDTIPLKENNPKQEYMSDLEVDLCSQHLKRSIELIVSEVFNKKISSMIKNKANNTPKELKVRWINAYFPWTAPSWEIEVWWQGEWLELCGCGLIRQDVLLRAGYKPSETIGWAFGLGLDRIAMLLFEIPDIRLLWSRDERFSRQFSKGLITSFKPYSKHPGSFRDVAFWLPEDKPDIHQVHENDLMEIIRNIAGDLVESVKLVDSFTHPKTGRKSMCYRINYQSMDRNLTNAEVNTLQDMVCSKLVKEYSVELR.

The transit peptide at 1 to 17 directs the protein to the mitochondrion; it reads MFLNRMMKTRTGLYRLY. Residues 126–129, Arg155, 162–164, 169–171, Glu302, and Phe329 contribute to the substrate site; these read SAHE, THY, and QME. The 98-residue stretch at 372-469 folds into the FDX-ACB domain; that stretch reads SKHPGSFRDV…LVKEYSVELR (98 aa).

Belongs to the class-II aminoacyl-tRNA synthetase family. As to quaternary structure, monomer.

It localises to the mitochondrion matrix. It catalyses the reaction tRNA(Phe) + L-phenylalanine + ATP = L-phenylalanyl-tRNA(Phe) + AMP + diphosphate + H(+). Functionally, is responsible for the charging of tRNA(Phe) with phenylalanine in mitochondrial translation. This Saccharomyces cerevisiae (strain ATCC 204508 / S288c) (Baker's yeast) protein is Phenylalanine--tRNA ligase, mitochondrial (MSF1).